The chain runs to 444 residues: Tubulin beta-8 chain (444 aa).

An MREI motif motif is present at residues 1–4 (MREI). Positions 11, 69, 138, 142, 143, and 144 each coordinate GTP. Position 69 (glutamate 69) interacts with Mg(2+). Position 172 is a phosphoserine; by CDK1 (serine 172). Asparagine 204 and asparagine 226 together coordinate GTP. Residues 423–444 (QQYQDATAEEEEDEEYAEEEVA) are disordered. Acidic residues predominate over residues 429–444 (TAEEEEDEEYAEEEVA). At glutamate 436 the chain carries 5-glutamyl polyglutamate.

Belongs to the tubulin family. In terms of assembly, dimer of alpha and beta chains. A typical microtubule is a hollow water-filled tube with an outer diameter of 25 nm and an inner diameter of 15 nM. Alpha-beta heterodimers associate head-to-tail to form protofilaments running lengthwise along the microtubule wall with the beta-tubulin subunit facing the microtubule plus end conferring a structural polarity. Microtubules usually have 13 protofilaments but different protofilament numbers can be found in some organisms and specialized cells. The cofactor is Mg(2+). Post-translationally, some glutamate residues at the C-terminus are polyglutamylated, resulting in polyglutamate chains on the gamma-carboxyl group. Polyglutamylation plays a key role in microtubule severing by spastin (SPAST). SPAST preferentially recognizes and acts on microtubules decorated with short polyglutamate tails: severing activity by SPAST increases as the number of glutamates per tubulin rises from one to eight, but decreases beyond this glutamylation threshold. Glutamylation is also involved in cilia motility. Some glutamate residues at the C-terminus are monoglycylated but not polyglycylated due to the absence of functional TTLL10 in human. Monoglycylation is mainly limited to tubulin incorporated into cilia and flagella axonemes, which is required for their stability and maintenance. Flagella glycylation controls sperm motility. Both polyglutamylation and monoglycylation can coexist on the same protein on adjacent residues, and lowering glycylation levels increases polyglutamylation, and reciprocally. In terms of processing, phosphorylated on Ser-172 by CDK1 during the cell cycle, from metaphase to telophase, but not in interphase. This phosphorylation inhibits tubulin incorporation into microtubules. Expressed at a high level in oocytes, at different stages of development.

It is found in the cytoplasm. It localises to the cytoskeleton. The protein localises to the spindle. Its function is as follows. Tubulin is the major constituent of microtubules, a cylinder consisting of laterally associated linear protofilaments composed of alpha- and beta-tubulin heterodimers. Microtubules grow by the addition of GTP-tubulin dimers to the microtubule end, where a stabilizing cap forms. Below the cap, tubulin dimers are in GDP-bound state, owing to GTPase activity of alpha-tubulin. TUBB8 has a key role in meiotic spindle assembly and oocyte maturation. The protein is Tubulin beta-8 chain of Homo sapiens (Human).